The chain runs to 529 residues: Bifunctional purine biosynthesis protein PurH (529 aa).

The region spanning 1 to 148 (MQQRRPVRRA…KNHKDVAIVV (148 aa)) is the MGS-like domain. K287 is modified (N6-acetyllysine).

Belongs to the PurH family.

It catalyses the reaction (6R)-10-formyltetrahydrofolate + 5-amino-1-(5-phospho-beta-D-ribosyl)imidazole-4-carboxamide = 5-formamido-1-(5-phospho-D-ribosyl)imidazole-4-carboxamide + (6S)-5,6,7,8-tetrahydrofolate. The enzyme catalyses IMP + H2O = 5-formamido-1-(5-phospho-D-ribosyl)imidazole-4-carboxamide. It participates in purine metabolism; IMP biosynthesis via de novo pathway; 5-formamido-1-(5-phospho-D-ribosyl)imidazole-4-carboxamide from 5-amino-1-(5-phospho-D-ribosyl)imidazole-4-carboxamide (10-formyl THF route): step 1/1. It functions in the pathway purine metabolism; IMP biosynthesis via de novo pathway; IMP from 5-formamido-1-(5-phospho-D-ribosyl)imidazole-4-carboxamide: step 1/1. The sequence is that of Bifunctional purine biosynthesis protein PurH from Escherichia coli O127:H6 (strain E2348/69 / EPEC).